A 541-amino-acid polypeptide reads, in one-letter code: Forkhead box protein O (541 aa).

A compositionally biased stretch (polar residues) spans 118–150 (NEQCGQLGGASSNGSTAMLHTPDGSNSHQTSFP). Disordered stretches follow at residues 118–168 (NEQC…GKKT) and 252–291 (WVIN…GAKK). The fork-head DNA-binding region spans 175-268 (WGNMSYAELI…KPGRNPRRTR (94 aa)). Thr273 bears the Phosphothreonine mark. Ser319 carries the phosphoserine; by CaMK2 modification.

Interacts with rle-1. Interacts with unc-43 and tax-6. Interacts with jnk-1. Interacts with ftt-2. Interacts with prmt-1. Interacts with hcf-1. In terms of processing, phosphorylated by akt-1 and/or akt-2. Phosphorylated by sgk-1. Phosphorylated by unc-43. Phosphorylated by jnk-1. Dephosphorylated by tax-6 in vitro. Ubiquitinated. Ubiquitination by rle-1 leads to proteasome-mediated degradation. Post-translationally, methylation by prmt-1 prevents phosphorylation and promotes translocation to the nucleus to allow for daf-16-dependent transcription. Isoform b and isoform c are expressed in ectoderm, muscles, intestine and neurons. Isoform b is also expressed in the pharynx. The intestine appears to be the primary site of longevity function.

It is found in the nucleus. It localises to the cytoplasm. Forkhead-type transcription factor. Binds to the promoters of genes that contain the daf-16/FOXO binding element (DBE), TTGTTTAC, in their regulatory region. Functions in the Insulin/IGF-1-like signaling (IIS) mediated pathway which affects lipogenesis, lifespan, starvation survival, heat shock and oxidative stress responses, sleep, associative memory, and dauer formation. Longevity signaling predominantly arises from expression in the intestine. Acts in the intestine to mediate the role of slo-1 in age-associated decline in motor activity and longevity. Transcriptional activity of daf-16/FOXO is negatively regulated by interaction with host cell factor homolog hcf-1; and by cytoplasmic sequestration by association with ftt-2. Inhibition is required for the carbon dioxide (CO2) avoidance response. Upon loss of inhibition, daf-16 translocates to the nucleus to regulate genes that result in delayed reproduction and growth while increasing stress resistance starvation tolerance and longevity. Association with arginine methyltransferase prmt-1 prevents phosphorylation and allows for translocation to the nucleus and the subsequent transcription of longevity-related genes. Modulation of its activity by cGMP levels in sensory neurons regulates lifespan. Has a protective role against muscle dystrophy. Involved in mediating protection against aberrant protein aggregation proteotoxicity. Influences transcription of genes that code for proteins involved in immunity as part of a general stress response. Targets genes that inhibit and stimulate tumor growth. Targets kinases, phosphatases and transcription factors that are primarily involved in signaling and gene regulation. Thought to regulate ins-7 in FOXO-to-FOXO signaling, which coordinates daf-16 expression. Activity is positively regulated by shc-1-mediated inhibition of daf-2 and activation of JNK pathway. Through the regulation of its activity by shc-1-mediated inhibition of daf-2 and activation of JNK pathway, plays a role in maintaining the integrity of the gonad. Functions by indirect interaction with jnk-1 of the mitogen-activated protein kinase (MAPK) pathway. Involved in increased proteasome activity by activating expression of rpn-6.1 in response to proteotoxic stress, leading to enhanced assembly of the 26S proteasome, followed by higher proteasome activity. Also regulates proteasome activity in the intestine by preventing expression of deubiquitinase ubh-4. Represses transcription of natc-1. Involved in regulation of srh-234 expression. Binds to the promoter of the AMPK-gamma regulatory subunit, aakg-4, and activates its transcription. Also activates transcription of AMPK-gamma regulatory subunit, aakg-1. Maintains endoplasmic reticulum (ER) function by inducing protein degradation and elimination to remove misfolded secretory proteins from the ER independently of the ire-1/xbp-1 unfolded protein response pathway. Regulates epidermal innate immunity to nematophagous fungal infection and physical wounding which trigger bli-3 induced ROS release, leading to daf-16 activation independently of daf-2 signaling. May negatively regulate resistance to stress caused by oxidized cholesterol adducts by preventing the activation of daf-9 and nuclear hormone receptor daf-12, two members of the steroid signaling pathway. Promotes apoptosis during embryonic development. Probably through the regulation of the autophagy genes atg-18 and atg-16.2, plays a role in regulating stem cell number in the germline during larval development. Plays a role in learning and memory; including associative memory, and aversive gustatory associated learning known as salt avoidance learning. Plays a role in regulating gene transcription in response to white light exposure. Binds to the promoter of dex-1 to positively regulate its expression in seam cells during the dauer phase. Plays a role in transgenerational lipid accumulation in response to a high-fat diet. Functionally, functions in the Insulin/IGF-1-like signaling (IIS) mediated pathway. May play a role in lifespan modulation, but less significant than that played by isoforms d and f. Its function is as follows. Functions in the Insulin/IGF-1-like signaling (IIS) mediated pathway. Transcript level in the early adult may play a role in lifespan modulation, but effect is more significant than that played by isoform a. The protein is Forkhead box protein O of Caenorhabditis elegans.